The primary structure comprises 8797 residues: Nesprin-1 (8797 aa).

The segment at 1 to 289 (MATSRGASRC…KHYPDIHNAS (289 aa)) is actin-binding. Topologically, residues 1–8746 (MATSRGASRC…GRGFLFRVLR (8746 aa)) are cytoplasmic. 2 consecutive Calponin-homology (CH) domains span residues 27-134 (IVQK…LYFQ) and 178-283 (GNAK…KHYP). Spectrin repeat units lie at residues 314–397 (REDR…SRLF), 398–502 (DWHI…HLMK), 503–609 (MEFL…SMLE), 610–703 (EVIS…YAQA), 704–815 (DEMD…QLLI), 816–923 (PLEE…KHVE), 924–1024 (TNSR…HLKI), 1025–1122 (DVEK…LMED), 1123–1246 (PDKW…NSLE), 1247–1335 (ELIS…ERRI), 1336–1444 (QVTL…MEMV), 1445–1550 (KTKW…ILGH), 1551–1653 (LSQQ…LENL), 1654–1763 (LAHW…LQSV), 1764–1879 (VAEH…SHAS), 1880–1976 (LSGI…ADAL), 1977–2081 (AVLK…QGQC), 2082–2195 (CGLI…LRVS), 2196–2303 (LSIW…KDFT), 2304–2401 (AQST…KTQA), 2402–2513 (SLQE…LQDC), 2514–2619 (ASEL…LRSC), 2620–2731 (QVAL…LESV), 2732–2838 (ISQW…VEEI), 2839–2962 (VKDH…SGQV), 2963–3062 (AQLE…QNKE), 3063–3171 (QILQ…LENL), 3172–3275 (KIQM…VSRL), 3276–3387 (DRIV…LEGA), 3388–3490 (LSKW…SEKL), 3491–3593 (VRLH…RTQF), 3594–3720 (NNVV…YSDW), 3721–3814 (YGST…LEKG), 3815–3920 (LHLA…LEAK), 3921–4028 (VKDH…QRMY), 4029–4139 (QSLE…KHLK), 4140–4235 (SELW…REED), 4236–4339 (LQRT…IQVS), 4340–4451 (VTNL…LNKA), 4452–4560 (LSEK…LEKN), 4561–4669 (LVSR…VQEA), 4670–4776 (ILAR…LEDT), 4777–4882 (TSAY…CESR), 4883–4991 (MVQS…LTEI), 4992–5099 (YSQC…LQRC), 5100–5209 (TAQW…LEDA), 5210–5318 (VDEW…GKLV), 5319–5424 (KQEL…EQSK), 5425–5522 (ATSQ…LSKL), 5523–5630 (NQAA…LQDA), 5631–5736 (AKDM…MQEA), and 5737–5842 (VVQY…PSAH). A coiled-coil region spans residues 314-8666 (REDRVIFKEM…EKLLDVSSSQ (8353 aa)). S732 bears the Phosphoserine mark. T2270 bears the Phosphothreonine mark. At S5657 the chain carries Phosphoserine. The segment at 5859 to 5886 (PVTEESGEEGTNSEISSPPACRSPSPVA) is disordered. 19 Spectrin repeats span residues 5962-6071 (LERQ…LEEK), 6072-6178 (LNDQ…SLLE), 6374-6485 (RQSI…RLQQ), 6486-6581 (ILNF…RSGL), 6582-6691 (NQNL…LETW), 6692-6795 (SHLD…TILK), 6796-6902 (HWTR…QEKL), 6903-7020 (HQLQ…LEGL), 7021-7128 (LESW…LKSV), 7129-7237 (LDQW…SKAL), 7238-7350 (LQLW…LQAG), 7351-7454 (VLDY…LQSF), 7455-7558 (LLQH…RGII), 7559-7671 (DSQI…LAFL), 7672-7783 (LKDW…NEWA), 7784-7883 (VFSE…LKET), 7884-7997 (LVAV…IEET), 7998-8106 (WRLW…LKHF), and 8107-8216 (IGQR…LPLP). Residue S8223 is modified to Phosphoserine. The segment at 8246–8279 (DSLLSPQPSSNLSLSLAQPLRSERSGRDTPASVD) is disordered. Residues 8247–8265 (SLLSPQPSSNLSLSLAQPL) are compositionally biased toward low complexity. The residue at position 8274 (T8274) is a Phosphothreonine. 3 positions are modified to phosphoserine: S8277, S8280, and S8305. Spectrin repeat units lie at residues 8329 to 8438 (SALE…MKQN), 8439 to 8548 (LQKW…LQDA), and 8549 to 8666 (LMQC…SSSQ). At T8360 the chain carries Phosphothreonine. The interval 8671-8734 (SWSSADELDT…DSSLSEPGPG (64 aa)) is disordered. Polar residues-rich tracts occupy residues 8680-8696 (TSGS…PNRQ) and 8704-8729 (SLSQ…SSLS). Residues 8738 to 8797 (RGFLFRVLRAALPLQLLLLLLIGLACLVPMSEEDYSCALSNNFARSFHPMLRYTNGPPPL) enclose the KASH domain. The chain crosses the membrane as a helical; Anchor for type IV membrane protein span at residues 8747–8767 (AALPLQLLLLLLIGLACLVPM). The Perinuclear space segment spans residues 8768–8797 (SEEDYSCALSNNFARSFHPMLRYTNGPPPL).

It belongs to the nesprin family. In terms of assembly, core component of LINC complexes which are composed of inner nuclear membrane SUN domain-containing proteins coupled to outer nuclear membrane KASH domain-containing nesprins. SUN and KASH domain-containing proteins seem to bind each other promiscuously; however, differentially expression of LINC complex constituents can give rise to specific assemblies. At least SUN1/2-containing core LINC complexes are proposed to be hexameric composed of three protomers of each KASH and SUN domain-containing protein. The SUN2:SYNE1/KASH1 LINC complex is a heterohexamer; the homotrimeric cloverleave-like conformation of the SUN domain is a prerequisite for LINC complex formation in which three separate SYNE1/KASH1 peptides bind at the interface of adjacent SUN domains. Self-associates. Interacts with SYNE3. Interacts with SPAG4/SUN4. May interact with MUSK. Interacts with F-actin via its N-terminal domain. Interacts with EMD and LMNA in vitro. Interacts (via KASH domain) with TMEM258. Post-translationally, the disulfid bond with SUN1 or SUN2 is required for stability of the respective LINC complex under tensile forces. In terms of tissue distribution, expressed in HeLa, A431, A172 and HaCaT cells (at protein level). Widely expressed. Highly expressed in skeletal and smooth muscles, heart, spleen, peripheral blood leukocytes, pancreas, cerebellum, stomach, kidney and placenta. Isoform GSRP-56 is predominantly expressed in heart and skeletal muscle (at protein level).

The protein localises to the nucleus outer membrane. It is found in the nucleus. It localises to the nucleus envelope. Its subcellular location is the cytoplasm. The protein resides in the cytoskeleton. The protein localises to the myofibril. It is found in the sarcomere. It localises to the golgi apparatus. Its function is as follows. Multi-isomeric modular protein which forms a linking network between organelles and the actin cytoskeleton to maintain the subcellular spatial organization. As a component of the LINC (LInker of Nucleoskeleton and Cytoskeleton) complex involved in the connection between the nuclear lamina and the cytoskeleton. The nucleocytoplasmic interactions established by the LINC complex play an important role in the transmission of mechanical forces across the nuclear envelope and in nuclear movement and positioning. May be involved in nucleus-centrosome attachment and nuclear migration in neural progenitors implicating LINC complex association with SUN1/2 and probably association with cytoplasmic dynein-dynactin motor complexes; SYNE1 and SYNE2 may act redundantly. Required for centrosome migration to the apical cell surface during early ciliogenesis. May be involved in nuclear remodeling during sperm head formation in spermatogenesis; a probable SUN3:SYNE1/KASH1 LINC complex may tether spermatid nuclei to posterior cytoskeletal structures such as the manchette. This chain is Nesprin-1, found in Homo sapiens (Human).